The chain runs to 403 residues: Phosphopentomutase 2 (403 aa).

Mn(2+) contacts are provided by aspartate 13, aspartate 298, histidine 303, aspartate 339, histidine 340, and histidine 351.

Belongs to the phosphopentomutase family. Mn(2+) is required as a cofactor.

The protein resides in the cytoplasm. The enzyme catalyses 2-deoxy-alpha-D-ribose 1-phosphate = 2-deoxy-D-ribose 5-phosphate. It catalyses the reaction alpha-D-ribose 1-phosphate = D-ribose 5-phosphate. The protein operates within carbohydrate degradation; 2-deoxy-D-ribose 1-phosphate degradation; D-glyceraldehyde 3-phosphate and acetaldehyde from 2-deoxy-alpha-D-ribose 1-phosphate: step 1/2. Functionally, isomerase that catalyzes the conversion of deoxy-ribose 1-phosphate (dRib-1-P) and ribose 1-phosphate (Rib-1-P) to deoxy-ribose 5-phosphate (dRib-5-P) and ribose 5-phosphate (Rib-5-P), respectively. The polypeptide is Phosphopentomutase 2 (Streptococcus agalactiae serotype Ia (strain ATCC 27591 / A909 / CDC SS700)).